We begin with the raw amino-acid sequence, 386 residues long: Convicilin (386 aa).

The N-terminal stretch at 1–29 is a signal peptide; that stretch reads MATTIKSRFPLLLLLGIIFLASVVSVTYA. Residues 33-199 are disordered; the sequence is EGSEPRVPAQ…EERSSESQER (167 aa). Basic and acidic residues-rich tracts occupy residues 41–65, 74–91, 104–144, and 153–186; these read AQRE…PSYE, QRER…RHGE, EKQK…RWER, and EEWR…HQRE. Residues 202–359 form the Cupin type-1 domain; that stretch reads PFLFKSNKFL…SYNTRYETIE (158 aa). The disordered stretch occupies residues 367–386; that stretch reads EKDRKRRQQGEETDAIVKVS.

It belongs to the 7S seed storage protein family.

Its subcellular location is the vacuole. It is found in the aleurone grain. Seed storage protein. The sequence is that of Convicilin (CVCB) from Pisum sativum (Garden pea).